Consider the following 73-residue polypeptide: Frenatin 3.1 (73 aa).

The first 22 residues, 1–22 (MHFLKKSIFLVLFLGLVSLSIC), serve as a signal peptide directing secretion. Positions 23-46 (EKEKREDQNEEEVDENEEASEEKR) are excised as a propeptide. Positions 25–45 (EKREDQNEEEVDENEEASEEK) are disordered. The span at 30 to 42 (QNEEEVDENEEAS) shows a compositional bias: acidic residues.

In terms of tissue distribution, expressed by the skin glands.

Its subcellular location is the secreted. Functionally, antimicrobial peptide with activity against both Gram-positive and Gram-negative bacteria. The sequence is that of Frenatin 3.1 from Nyctimystes infrafrenatus (White-lipped tree frog).